Consider the following 307-residue polypeptide: Ribosomal RNA small subunit methyltransferase H (307 aa).

S-adenosyl-L-methionine contacts are provided by residues 34–36, Asp-54, Phe-79, Asp-101, and Gln-108; that span reads GGH.

Belongs to the methyltransferase superfamily. RsmH family.

It is found in the cytoplasm. The catalysed reaction is cytidine(1402) in 16S rRNA + S-adenosyl-L-methionine = N(4)-methylcytidine(1402) in 16S rRNA + S-adenosyl-L-homocysteine + H(+). Specifically methylates the N4 position of cytidine in position 1402 (C1402) of 16S rRNA. This is Ribosomal RNA small subunit methyltransferase H from Ruthia magnifica subsp. Calyptogena magnifica.